We begin with the raw amino-acid sequence, 1184 residues long: Protein stu1 (1184 aa).

HEAT repeat units follow at residues F92 to V130 and R162 to A194. Composition is skewed to basic and acidic residues over residues S229–P240 and E308–T317. The disordered stretch occupies residues S229–S336. The stretch at V463–Q499 is one HEAT 3 repeat. 2 disordered regions span residues L564–L584 and A602–E906. Residues N572 to L584 are compositionally biased toward polar residues. Over residues A640–P649 the composition is skewed to low complexity. The span at S723–A737 shows a compositional bias: polar residues. Composition is skewed to basic and acidic residues over residues A787–L811 and E882–E895.

It belongs to the CLASP family. In terms of assembly, interacts with microtubules.

It is found in the cytoplasm. It localises to the cytoskeleton. The protein resides in the nucleus. The protein localises to the spindle. Its function is as follows. Microtubule binding protein that promotes the stabilization of dynamic microtubules. Required for mitotic spindle formation. This chain is Protein stu1 (stu1), found in Aspergillus oryzae (strain ATCC 42149 / RIB 40) (Yellow koji mold).